We begin with the raw amino-acid sequence, 133 residues long: ATP synthase epsilon chain (133 aa).

Belongs to the ATPase epsilon chain family. In terms of assembly, F-type ATPases have 2 components, CF(1) - the catalytic core - and CF(0) - the membrane proton channel. CF(1) has five subunits: alpha(3), beta(3), gamma(1), delta(1), epsilon(1). CF(0) has three main subunits: a, b and c.

The protein localises to the cell membrane. Functionally, produces ATP from ADP in the presence of a proton gradient across the membrane. The protein is ATP synthase epsilon chain (atpC) of Mycoplasma pneumoniae (strain ATCC 29342 / M129 / Subtype 1) (Mycoplasmoides pneumoniae).